We begin with the raw amino-acid sequence, 129 residues long: Glycine cleavage system H protein (129 aa).

The Lipoyl-binding domain occupies 24-106; it reads LVRVGISAFA…HGEGWLLVLR (83 aa). Lys-65 carries the post-translational modification N6-lipoyllysine.

Belongs to the GcvH family. In terms of assembly, the glycine cleavage system is composed of four proteins: P, T, L and H. Requires (R)-lipoate as cofactor.

In terms of biological role, the glycine cleavage system catalyzes the degradation of glycine. The H protein shuttles the methylamine group of glycine from the P protein to the T protein. The chain is Glycine cleavage system H protein from Parasynechococcus marenigrum (strain WH8102).